A 419-amino-acid chain; its full sequence is L-rhamnose isomerase (419 aa).

Mn(2+) is bound by residues H262, D294, and D296.

It belongs to the rhamnose isomerase family. Homotetramer. Mn(2+) serves as cofactor.

Its subcellular location is the cytoplasm. It carries out the reaction L-rhamnopyranose = L-rhamnulose. It functions in the pathway carbohydrate degradation; L-rhamnose degradation; glycerone phosphate from L-rhamnose: step 1/3. In terms of biological role, catalyzes the interconversion of L-rhamnose and L-rhamnulose. In Shigella boydii serotype 4 (strain Sb227), this protein is L-rhamnose isomerase.